Reading from the N-terminus, the 241-residue chain is Phycocyanobilin:ferredoxin oxidoreductase (241 aa).

Belongs to the HY2 family.

The enzyme catalyses (2R,3Z)-phycocyanobilin + 4 oxidized [2Fe-2S]-[ferredoxin] = biliverdin IXalpha + 4 reduced [2Fe-2S]-[ferredoxin] + 4 H(+). Catalyzes the four-electron reduction of biliverdin IX-alpha (2-electron reduction at both the A and D rings); the reaction proceeds via an isolatable 2-electron intermediate, 181,182-dihydrobiliverdin. This Prochlorococcus marinus (strain MIT 9515) protein is Phycocyanobilin:ferredoxin oxidoreductase.